Here is a 910-residue protein sequence, read N- to C-terminus: Valine--tRNA ligase (910 aa).

The 'HIGH' region signature appears at P45–H55. A 'KMSKS' region motif is present at residues K554–S558. K557 is an ATP binding site. A coiled-coil region spans residues D842 to S910.

It belongs to the class-I aminoacyl-tRNA synthetase family. ValS type 1 subfamily. Monomer.

The protein localises to the cytoplasm. The catalysed reaction is tRNA(Val) + L-valine + ATP = L-valyl-tRNA(Val) + AMP + diphosphate. Functionally, catalyzes the attachment of valine to tRNA(Val). As ValRS can inadvertently accommodate and process structurally similar amino acids such as threonine, to avoid such errors, it has a 'posttransfer' editing activity that hydrolyzes mischarged Thr-tRNA(Val) in a tRNA-dependent manner. This Brucella suis biovar 1 (strain 1330) protein is Valine--tRNA ligase.